The following is a 290-amino-acid chain: 33 kDa chaperonin (290 aa).

2 disulfide bridges follow: C231–C233 and C263–C266.

It belongs to the HSP33 family. Under oxidizing conditions two disulfide bonds are formed involving the reactive cysteines. Under reducing conditions zinc is bound to the reactive cysteines and the protein is inactive.

It is found in the cytoplasm. Functionally, redox regulated molecular chaperone. Protects both thermally unfolding and oxidatively damaged proteins from irreversible aggregation. Plays an important role in the bacterial defense system toward oxidative stress. The polypeptide is 33 kDa chaperonin (Thermotoga petrophila (strain ATCC BAA-488 / DSM 13995 / JCM 10881 / RKU-1)).